Reading from the N-terminus, the 282-residue chain is uncharacterized protein (282 aa).

Tyr-50 acts as the Proton donor in catalysis. His-115 serves as a coordination point for substrate.

The protein belongs to the aldo/keto reductase family.

This is an uncharacterized protein from Saccharomyces cerevisiae (strain ATCC 204508 / S288c) (Baker's yeast).